A 462-amino-acid chain; its full sequence is Ribosomal protein uS12 methylthiotransferase RimO (462 aa).

An MTTase N-terminal domain is found at 10–125 (PRIGMVSLGC…VLDAVHRNLP (116 aa)). [4Fe-4S] cluster contacts are provided by Cys-19, Cys-55, Cys-84, Cys-160, Cys-164, and Cys-167. The Radical SAM core domain maps to 146-388 (LTPRHYAYLK…AVAEALSSAK (243 aa)). Positions 390 to 462 (QRRVGATMQV…RGHDLLAQPI (73 aa)) constitute a TRAM domain.

It belongs to the methylthiotransferase family. RimO subfamily. [4Fe-4S] cluster serves as cofactor.

The protein resides in the cytoplasm. The enzyme catalyses L-aspartate(89)-[ribosomal protein uS12]-hydrogen + (sulfur carrier)-SH + AH2 + 2 S-adenosyl-L-methionine = 3-methylsulfanyl-L-aspartate(89)-[ribosomal protein uS12]-hydrogen + (sulfur carrier)-H + 5'-deoxyadenosine + L-methionine + A + S-adenosyl-L-homocysteine + 2 H(+). Functionally, catalyzes the methylthiolation of an aspartic acid residue of ribosomal protein uS12. This is Ribosomal protein uS12 methylthiotransferase RimO from Verminephrobacter eiseniae (strain EF01-2).